The primary structure comprises 153 residues: 3-hydroxyacyl-[acyl-carrier-protein] dehydratase FabZ (153 aa).

His56 is a catalytic residue.

The protein belongs to the thioester dehydratase family. FabZ subfamily.

It is found in the cytoplasm. It carries out the reaction a (3R)-hydroxyacyl-[ACP] = a (2E)-enoyl-[ACP] + H2O. In terms of biological role, involved in unsaturated fatty acids biosynthesis. Catalyzes the dehydration of short chain beta-hydroxyacyl-ACPs and long chain saturated and unsaturated beta-hydroxyacyl-ACPs. The polypeptide is 3-hydroxyacyl-[acyl-carrier-protein] dehydratase FabZ (Halorhodospira halophila (strain DSM 244 / SL1) (Ectothiorhodospira halophila (strain DSM 244 / SL1))).